The sequence spans 483 residues: NADH-quinone oxidoreductase subunit N (483 aa).

A run of 13 helical transmembrane segments spans residues 7–27 (AILT…LGAV), 33–53 (ALAS…AFYI), 76–96 (FAKI…QDYM), 108–128 (VLII…DLIA), 161–181 (FVLG…AYGF), 196–216 (GGDM…GLAF), 235–255 (PTPI…ALFA), 272–292 (IVAF…IGQT), 297–317 (LMAY…SAGT), 323–343 (AMLI…AFIL), 369–389 (ALAI…LGFF), 402–422 (GLVW…FYYI), and 442–462 (MGLV…LGWV).

The protein belongs to the complex I subunit 2 family. As to quaternary structure, NDH-1 is composed of 14 different subunits. Subunits NuoA, H, J, K, L, M, N constitute the membrane sector of the complex.

Its subcellular location is the cell inner membrane. It catalyses the reaction a quinone + NADH + 5 H(+)(in) = a quinol + NAD(+) + 4 H(+)(out). Functionally, NDH-1 shuttles electrons from NADH, via FMN and iron-sulfur (Fe-S) centers, to quinones in the respiratory chain. The immediate electron acceptor for the enzyme in this species is believed to be ubiquinone. Couples the redox reaction to proton translocation (for every two electrons transferred, four hydrogen ions are translocated across the cytoplasmic membrane), and thus conserves the redox energy in a proton gradient. The protein is NADH-quinone oxidoreductase subunit N of Jannaschia sp. (strain CCS1).